Consider the following 249-residue polypeptide: tRNA uridine(34) hydroxylase (249 aa).

The 95-residue stretch at 124 to 218 (TKQDVIVIDT…YLEDTQNKNN (95 aa)) folds into the Rhodanese domain. The active-site Cysteine persulfide intermediate is Cys-178.

This sequence belongs to the TrhO family.

The enzyme catalyses uridine(34) in tRNA + AH2 + O2 = 5-hydroxyuridine(34) in tRNA + A + H2O. Its function is as follows. Catalyzes oxygen-dependent 5-hydroxyuridine (ho5U) modification at position 34 in tRNAs. In Rickettsia canadensis (strain McKiel), this protein is tRNA uridine(34) hydroxylase.